We begin with the raw amino-acid sequence, 70 residues long: Exodeoxyribonuclease 7 small subunit (70 aa).

This sequence belongs to the XseB family. As to quaternary structure, heterooligomer composed of large and small subunits.

It localises to the cytoplasm. It carries out the reaction Exonucleolytic cleavage in either 5'- to 3'- or 3'- to 5'-direction to yield nucleoside 5'-phosphates.. In terms of biological role, bidirectionally degrades single-stranded DNA into large acid-insoluble oligonucleotides, which are then degraded further into small acid-soluble oligonucleotides. This Magnetococcus marinus (strain ATCC BAA-1437 / JCM 17883 / MC-1) protein is Exodeoxyribonuclease 7 small subunit.